The primary structure comprises 586 residues: Membrane protein insertase YidC (586 aa).

Transmembrane regions (helical) follow at residues 5–25 (TLIG…LMAP), 371–391 (GVII…LTMA), 436–456 (LGGC…FYVF), 486–506 (IPLY…AVFF), and 522–542 (FMMY…PSGL).

It belongs to the OXA1/ALB3/YidC family. Type 1 subfamily. Interacts with the Sec translocase complex via SecD. Specifically interacts with transmembrane segments of nascent integral membrane proteins during membrane integration.

It is found in the cell inner membrane. Functionally, required for the insertion and/or proper folding and/or complex formation of integral membrane proteins into the membrane. Involved in integration of membrane proteins that insert both dependently and independently of the Sec translocase complex, as well as at least some lipoproteins. Aids folding of multispanning membrane proteins. The polypeptide is Membrane protein insertase YidC (Chloroherpeton thalassium (strain ATCC 35110 / GB-78)).